The following is a 304-amino-acid chain: Dihydroorotate dehydrogenase B (NAD(+)), catalytic subunit (304 aa).

FMN contacts are provided by residues Ser22 and 46 to 47 (KA). Substrate is bound by residues Lys46 and 70–74 (NAIGL). Residues Asn100 and Asn128 each contribute to the FMN site. Asn128 is a binding site for substrate. Cys131 functions as the Nucleophile in the catalytic mechanism. The FMN site is built by Lys166 and Ile192. 193–194 (NT) lines the substrate pocket. Residues Gly218, 244–245 (GG), and 266–267 (GT) contribute to the FMN site.

Belongs to the dihydroorotate dehydrogenase family. Type 1 subfamily. As to quaternary structure, heterotetramer of 2 PyrK and 2 PyrD type B subunits. FMN serves as cofactor.

The protein localises to the cytoplasm. The enzyme catalyses (S)-dihydroorotate + NAD(+) = orotate + NADH + H(+). Its pathway is pyrimidine metabolism; UMP biosynthesis via de novo pathway; orotate from (S)-dihydroorotate (NAD(+) route): step 1/1. In terms of biological role, catalyzes the conversion of dihydroorotate to orotate with NAD(+) as electron acceptor. This is Dihydroorotate dehydrogenase B (NAD(+)), catalytic subunit (pyrD) from Fusobacterium nucleatum subsp. nucleatum (strain ATCC 25586 / DSM 15643 / BCRC 10681 / CIP 101130 / JCM 8532 / KCTC 2640 / LMG 13131 / VPI 4355).